The primary structure comprises 337 residues: Anthranilate phosphoribosyltransferase (337 aa).

Residues glycine 80, 83–84 (GD), threonine 88, 90–93 (NIST), 108–116 (KHGNRAVSS), and serine 120 contribute to the 5-phospho-alpha-D-ribose 1-diphosphate site. Residue glycine 80 participates in anthranilate binding. Mg(2+) is bound at residue serine 92. An anthranilate-binding site is contributed by asparagine 111. Arginine 166 is a binding site for anthranilate. Mg(2+) contacts are provided by aspartate 224 and glutamate 225.

Belongs to the anthranilate phosphoribosyltransferase family. In terms of assembly, homodimer. Mg(2+) serves as cofactor.

It carries out the reaction N-(5-phospho-beta-D-ribosyl)anthranilate + diphosphate = 5-phospho-alpha-D-ribose 1-diphosphate + anthranilate. Its pathway is amino-acid biosynthesis; L-tryptophan biosynthesis; L-tryptophan from chorismate: step 2/5. Its function is as follows. Catalyzes the transfer of the phosphoribosyl group of 5-phosphorylribose-1-pyrophosphate (PRPP) to anthranilate to yield N-(5'-phosphoribosyl)-anthranilate (PRA). This is Anthranilate phosphoribosyltransferase from Anaeromyxobacter dehalogenans (strain 2CP-C).